The primary structure comprises 512 residues: MEAANEPVNGGSVQIRTENNERRKLPNFLQSVNMKYVKLGYHYLITHLFKLCLVPLMAVLVTEISRLTTDDLYQIWLHLQYNLVAFIFLSALAIFGSTVYIMSRPRSVYLVDYSCYLPPESLQVKYQKFMDHSKLIEDFNESSLEFQRKILERSGLGEETYLPEALHCIPPRPTMMAAREESEQVMFGALDKLFENTKINPRDIGVLVVNCSLFNPTPSLSAMIVNKYKLRGNVKSFNLGGMGCSAGVISIDLAKDMLQVHRNTYAVVVSTENITQNWYFGNKKAMLIPNCLFRVGGSAILLSNKGKDRRRSKYKLVHTVRTHKGAVEKAFNCVYQEQDDNGKTGVSLSKDLMAIAGEALKANITTLGPLVLPISEQILFFMTLVTKKLFNSKLKPYIPDFKLAFDHFCIHAGGRAVIDELEKNLQLSQTHVEASRMTLHRFGNTSSSSIWYELAYIEAKGRMKKGNRVWQIAFGSGFKCNSAVWVALNNVKPSVSSPWEHCIDRYPVKLDF.

2 consecutive transmembrane segments (helical) span residues 44–64 (LITHLFKLCLVPLMAVLVTEI) and 83–103 (LVAFIFLSALAIFGSTVYIMS). Residues 100–389 (YIMSRPRSVY…FFMTLVTKKL (290 aa)) form the FAE domain. Catalysis depends on residues Cys-244, His-323, His-407, His-411, His-440, and Asn-444.

Belongs to the thiolase-like superfamily. Chalcone/stilbene synthases family. As to expression, expressed in seedlings, stems, leaves, flowers and siliques. Expressed in roots, leaves, and stems, including epidermis, silique walls, sepals, the upper portion of the styles, and seed coats, but not in developing embryos.

It is found in the endoplasmic reticulum membrane. It carries out the reaction a very-long-chain acyl-CoA + malonyl-CoA + H(+) = a very-long-chain 3-oxoacyl-CoA + CO2 + CoA. It participates in lipid metabolism; fatty acid biosynthesis. Its function is as follows. Involved in the elongation of C22 to C24 fatty acids, which are precursors for the biosynthesis of cuticular waxes, aliphatic suberins, and membrane lipids, including sphingolipids and phospholipids. This Arabidopsis thaliana (Mouse-ear cress) protein is 3-ketoacyl-CoA synthase 9.